The primary structure comprises 413 residues: Cardiolipin synthase B (413 aa).

PLD phosphodiesterase domains follow at residues 108 to 135 and 285 to 312; these read IFRR…SAEH and RRRP…DPLS. Residues H113, K115, D120, H290, K292, and D297 contribute to the active site. Positions 388–413 are disordered; that stretch reads AQVPPPAQPEMETQDRVDPENTGVKP.

This sequence belongs to the phospholipase D family. Cardiolipin synthase subfamily. ClsB sub-subfamily.

The protein localises to the cell membrane. The catalysed reaction is 2 a 1,2-diacyl-sn-glycero-3-phospho-(1'-sn-glycerol) = a cardiolipin + glycerol. Its function is as follows. Catalyzes the phosphatidyl group transfer from one phosphatidylglycerol molecule to another to form cardiolipin (CL) (diphosphatidylglycerol) and glycerol. The protein is Cardiolipin synthase B of Salmonella typhimurium (strain LT2 / SGSC1412 / ATCC 700720).